The sequence spans 477 residues: Exodeoxyribonuclease 7 large subunit (477 aa).

The interval 452-477 is disordered; that stretch reads KAAAAPKRVKKSPPPGTSGAQEDLFG.

The protein belongs to the XseA family. Heterooligomer composed of large and small subunits.

It is found in the cytoplasm. It catalyses the reaction Exonucleolytic cleavage in either 5'- to 3'- or 3'- to 5'-direction to yield nucleoside 5'-phosphates.. Bidirectionally degrades single-stranded DNA into large acid-insoluble oligonucleotides, which are then degraded further into small acid-soluble oligonucleotides. This Erythrobacter litoralis (strain HTCC2594) protein is Exodeoxyribonuclease 7 large subunit.